The chain runs to 102 residues: Small ribosomal subunit protein uS10 (102 aa).

This sequence belongs to the universal ribosomal protein uS10 family. In terms of assembly, part of the 30S ribosomal subunit.

In terms of biological role, involved in the binding of tRNA to the ribosomes. The protein is Small ribosomal subunit protein uS10 of Methylocella silvestris (strain DSM 15510 / CIP 108128 / LMG 27833 / NCIMB 13906 / BL2).